The sequence spans 186 residues: Mating-type-like protein ALPHA2 (186 aa).

The segment at residues 112–174 (KKIKSRRLTK…NRRRKEKNTK (63 aa)) is a DNA-binding region (homeobox; TALE-type).

This sequence belongs to the TALE/M-ATYP homeobox family. In terms of assembly, forms a heterodimer with A1.

The protein localises to the nucleus. In terms of biological role, mating type proteins are sequence specific DNA-binding proteins that act as master switches in yeast differentiation by controlling gene expression in a cell type-specific fashion. Transcriptional corepressor that acts in conjunction with A1 to repress transcription both of homozygote-specific genes and of genes necessary for the white-opaque switch, a prerequisite for mating. The sequence is that of Mating-type-like protein ALPHA2 (MTLALPHA2) from Candida albicans (strain SC5314 / ATCC MYA-2876) (Yeast).